Here is a 240-residue protein sequence, read N- to C-terminus: uncharacterized protein (240 aa).

Residues 197–210 (PLKSHSASRLNHLT) are compositionally biased toward polar residues. Residues 197-222 (PLKSHSASRLNHLTPSPRPGETPLEN) are disordered.

This is an uncharacterized protein from Caenorhabditis elegans.